A 557-amino-acid chain; its full sequence is Formate--tetrahydrofolate ligase (557 aa).

Position 66–73 (66–73 (TPAGEGKS)) interacts with ATP.

This sequence belongs to the formate--tetrahydrofolate ligase family.

It carries out the reaction (6S)-5,6,7,8-tetrahydrofolate + formate + ATP = (6R)-10-formyltetrahydrofolate + ADP + phosphate. Its pathway is one-carbon metabolism; tetrahydrofolate interconversion. The sequence is that of Formate--tetrahydrofolate ligase from Clostridium botulinum (strain Okra / Type B1).